The sequence spans 523 residues: Sialate O-acetylesterase (523 aa).

Residues 1-23 (MVAPGLVLGLVLPLILWADRSAG) form the signal peptide. N-linked (GlcNAc...) asparagine glycosylation is found at Asn-107, Asn-138, Asn-267, Asn-290, Asn-401, and Asn-422.

It is found in the lysosome. The enzyme catalyses N-acetyl-9-O-acetylneuraminate + H2O = N-acetylneuraminate + acetate + H(+). The catalysed reaction is an Ac-O-9-sialoglycoconjugate + H2O = a sialoglycoconjugate + acetate + H(+). Functionally, catalyzes the removal of O-acetyl ester groups from position 9 of the free diacetylated sialate N-acetyl-9-O-acetylneuraminate (Neu5,9Ac2) in the cytosol and of the diacetylated sialate residues of sialylglycoconjugates in the lysosomes. Together with the sialate-O-acetyltransferase they regulate the balance of acetylated sialoglycoconjugates, key players in various processes such as cell-cell interactions, host-pathogen recognition, and tumor antigenicity. The sequence is that of Sialate O-acetylesterase (SIAE) from Pongo abelii (Sumatran orangutan).